Here is a 240-residue protein sequence, read N- to C-terminus: 4-hydroxy-tetrahydrodipicolinate reductase (240 aa).

7-12 contributes to the NAD(+) binding site; the sequence is GLSGTM. Residue Lys-35 participates in NADP(+) binding. Residues 74-76 and 98-101 contribute to the NAD(+) site; these read GTT and ATNM. The active-site Proton donor/acceptor is His-131. Residue His-132 coordinates (S)-2,3,4,5-tetrahydrodipicolinate. Catalysis depends on Lys-135, which acts as the Proton donor. Residue 141-142 coordinates (S)-2,3,4,5-tetrahydrodipicolinate; sequence GS.

It belongs to the DapB family.

The protein localises to the cytoplasm. It carries out the reaction (S)-2,3,4,5-tetrahydrodipicolinate + NAD(+) + H2O = (2S,4S)-4-hydroxy-2,3,4,5-tetrahydrodipicolinate + NADH + H(+). The catalysed reaction is (S)-2,3,4,5-tetrahydrodipicolinate + NADP(+) + H2O = (2S,4S)-4-hydroxy-2,3,4,5-tetrahydrodipicolinate + NADPH + H(+). Its pathway is amino-acid biosynthesis; L-lysine biosynthesis via DAP pathway; (S)-tetrahydrodipicolinate from L-aspartate: step 4/4. In terms of biological role, catalyzes the conversion of 4-hydroxy-tetrahydrodipicolinate (HTPA) to tetrahydrodipicolinate. This Alkaliphilus metalliredigens (strain QYMF) protein is 4-hydroxy-tetrahydrodipicolinate reductase.